Here is a 633-residue protein sequence, read N- to C-terminus: Threonine--tRNA ligase (633 aa).

The region spanning 1-61 (MINVYFSDNS…TEDCKFEVIT (61 aa)) is the TGS domain. Positions 242–533 (DHRKIGKELE…LIEHHSGKLP (292 aa)) are catalytic. Zn(2+) contacts are provided by cysteine 333, histidine 384, and histidine 510.

Belongs to the class-II aminoacyl-tRNA synthetase family. Homodimer. Requires Zn(2+) as cofactor.

It is found in the cytoplasm. The enzyme catalyses tRNA(Thr) + L-threonine + ATP = L-threonyl-tRNA(Thr) + AMP + diphosphate + H(+). Catalyzes the attachment of threonine to tRNA(Thr) in a two-step reaction: L-threonine is first activated by ATP to form Thr-AMP and then transferred to the acceptor end of tRNA(Thr). Also edits incorrectly charged L-seryl-tRNA(Thr). In Ehrlichia ruminantium (strain Welgevonden), this protein is Threonine--tRNA ligase.